We begin with the raw amino-acid sequence, 532 residues long: FAD-dependent monooxygenase hkm7 (532 aa).

FAD is bound by residues 191 to 193 (RIY) and D261.

The protein belongs to the PheA/TfdB FAD monooxygenase family.

The protein operates within secondary metabolite biosynthesis. In terms of biological role, FAD-dependent monooxygenase; part of the gene cluster that mediates the biosynthesis of hancockiamides, an unusual new family of N-cinnamoylated piperazines. The NRPS hkm10 and the NmrA-like reductase hkm9 are proposed to convert two molecules of L-Phe to the intermediary piperazine called xenocockiamide A. Xenocockiamide A is then converted to hancockiamide D via a series of hydroxylations and O-methylations. The tyrosinase hkm6 may catalyze an aromatic hydroxylation, then the 2-oxoglutarate-dependent Fe(II) dioxygenase hkm4 and the FAD-dependent phenol hydroxylase hkm7 may catalyze consecutive hydroxylations to install 2 more hydroxy groups, and the methyltransferase hkm8 probably catalyzes two methylations using 2 molecules of S-adenosyl-L-methionine (SAM). The NRPS hkm11 activates and transfers trans-cinnamate supplied by the PAL hkm12 to hancockiamide D and produces hancockiamide A. NRPS Hkm11 has the flexibility to tolerate the bulky hancockiamide G as a substrate and the absence of the acetyl-transferase hkm3 opens up the opportunity for hkm11 to introduce a second N-cinnamoyl moiety. The cytochrome P450 monooxygenase hkm5 catalyzes the methylenedioxy bridge formation, converting hancockiamide A into hancockiamide G. Hkm5 can also convert hancockiamide B into hancockiamide C, and hancockiamide D into hancockiamide H. The N-acetyltransferase hkm3 finally transfers an acetyl group to 1-N of piperazine, converting hancockiamide A into hancockiamide B and hancockiamide G into hancockiamide C. The polypeptide is FAD-dependent monooxygenase hkm7 (Aspergillus hancockii).